Consider the following 361-residue polypeptide: Phosphoserine aminotransferase (361 aa).

Ser9 and Arg42 together coordinate L-glutamate. Residues 76–77 (AR), Trp102, Thr153, Asp173, and Gln196 contribute to the pyridoxal 5'-phosphate site. Lys197 bears the N6-(pyridoxal phosphate)lysine mark. Position 238–239 (238–239 (NT)) interacts with pyridoxal 5'-phosphate.

The protein belongs to the class-V pyridoxal-phosphate-dependent aminotransferase family. SerC subfamily. Homodimer. It depends on pyridoxal 5'-phosphate as a cofactor.

It is found in the cytoplasm. It carries out the reaction O-phospho-L-serine + 2-oxoglutarate = 3-phosphooxypyruvate + L-glutamate. It catalyses the reaction 4-(phosphooxy)-L-threonine + 2-oxoglutarate = (R)-3-hydroxy-2-oxo-4-phosphooxybutanoate + L-glutamate. It participates in amino-acid biosynthesis; L-serine biosynthesis; L-serine from 3-phospho-D-glycerate: step 2/3. The protein operates within cofactor biosynthesis; pyridoxine 5'-phosphate biosynthesis; pyridoxine 5'-phosphate from D-erythrose 4-phosphate: step 3/5. Functionally, catalyzes the reversible conversion of 3-phosphohydroxypyruvate to phosphoserine and of 3-hydroxy-2-oxo-4-phosphonooxybutanoate to phosphohydroxythreonine. The polypeptide is Phosphoserine aminotransferase (Serratia proteamaculans (strain 568)).